The chain runs to 282 residues: Chorismate dehydratase (282 aa).

This sequence belongs to the MqnA/MqnD family. MqnA subfamily.

It carries out the reaction chorismate = 3-[(1-carboxyvinyl)-oxy]benzoate + H2O. The protein operates within quinol/quinone metabolism; menaquinone biosynthesis. Catalyzes the dehydration of chorismate into 3-[(1-carboxyvinyl)oxy]benzoate, a step in the biosynthesis of menaquinone (MK, vitamin K2). The protein is Chorismate dehydratase of Streptomyces coelicolor (strain ATCC BAA-471 / A3(2) / M145).